The primary structure comprises 190 residues: Ribosome maturation factor RimM (190 aa).

A PRC barrel domain is found at 102–190 (EDEYYWIDLV…RIDSDWPLED (89 aa)).

Belongs to the RimM family. As to quaternary structure, binds ribosomal protein uS19.

The protein resides in the cytoplasm. Its function is as follows. An accessory protein needed during the final step in the assembly of 30S ribosomal subunit, possibly for assembly of the head region. Essential for efficient processing of 16S rRNA. May be needed both before and after RbfA during the maturation of 16S rRNA. It has affinity for free ribosomal 30S subunits but not for 70S ribosomes. The protein is Ribosome maturation factor RimM of Bordetella avium (strain 197N).